The primary structure comprises 58 residues: U11-ctenitoxin-Pn1b (58 aa).

5 disulfides stabilise this stretch: cysteine 2–cysteine 16, cysteine 9–cysteine 22, cysteine 15–cysteine 40, cysteine 24–cysteine 38, and cysteine 48–cysteine 55.

Expressed by the venom gland.

It localises to the secreted. In terms of biological role, non-toxic to mice. This Phoneutria nigriventer (Brazilian armed spider) protein is U11-ctenitoxin-Pn1b.